Reading from the N-terminus, the 515-residue chain is Glucose-6-phosphate 1-dehydrogenase (515 aa).

2 residues coordinate NADP(+): R53 and K160. 4 residues coordinate substrate: H190, K194, E228, and D247. H252 functions as the Proton acceptor in the catalytic mechanism. A substrate-binding site is contributed by K352.

The protein belongs to the glucose-6-phosphate dehydrogenase family.

It catalyses the reaction D-glucose 6-phosphate + NADP(+) = 6-phospho-D-glucono-1,5-lactone + NADPH + H(+). The protein operates within carbohydrate degradation; pentose phosphate pathway; D-ribulose 5-phosphate from D-glucose 6-phosphate (oxidative stage): step 1/3. Functionally, catalyzes the oxidation of glucose 6-phosphate to 6-phosphogluconolactone. This is Glucose-6-phosphate 1-dehydrogenase from Treponema pallidum (strain Nichols).